We begin with the raw amino-acid sequence, 102 residues long: Small ribosomal subunit protein uS10 (102 aa).

This sequence belongs to the universal ribosomal protein uS10 family. As to quaternary structure, part of the 30S ribosomal subunit.

Functionally, involved in the binding of tRNA to the ribosomes. The chain is Small ribosomal subunit protein uS10 from Mycoplasma mobile (strain ATCC 43663 / 163K / NCTC 11711) (Mesomycoplasma mobile).